The chain runs to 315 residues: Fe(3+)-citrate-binding protein YfmC (315 aa).

A signal peptide spans 1 to 18 (MRTYSNKLIAIMSVLLLA). A lipid anchor (N-palmitoyl cysteine) is attached at cysteine 19. Cysteine 19 carries S-diacylglycerol cysteine lipidation. Residues 27 to 36 (SSQNNNGSGK) are compositionally biased toward low complexity. Residues 27–52 (SSQNNNGSGKSESKDSRVIHDEEGKT) are disordered. Basic and acidic residues predominate over residues 37 to 51 (SESKDSRVIHDEEGK). The 256-residue stretch at 60–315 (RVVVLELSFL…KDVLKKVYNK (256 aa)) folds into the Fe/B12 periplasmic-binding domain.

It belongs to the bacterial solute-binding protein 8 family. In terms of assembly, the complex is composed of one ATP-binding protein (YfmF), two transmembrane proteins (YfmD and YfmE) and a solute-binding protein (YfmC).

Its subcellular location is the cell membrane. In terms of biological role, part of the ABC transporter complex YfmCDEF involved in citrate-dependent Fe(3+) import. Binds citrate-dependent Fe(3+) and delivers it to the surface of YfmDE. In Bacillus subtilis (strain 168), this protein is Fe(3+)-citrate-binding protein YfmC (yfmC).